Reading from the N-terminus, the 164-residue chain is Putative 4-hydroxy-4-methyl-2-oxoglutarate aldolase (164 aa).

Substrate is bound by residues 79 to 82 (GDRL) and Arg-101. Asp-102 is an a divalent metal cation binding site.

It belongs to the class II aldolase/RraA-like family. In terms of assembly, homotrimer. It depends on a divalent metal cation as a cofactor.

The catalysed reaction is 4-hydroxy-4-methyl-2-oxoglutarate = 2 pyruvate. It carries out the reaction oxaloacetate + H(+) = pyruvate + CO2. Catalyzes the aldol cleavage of 4-hydroxy-4-methyl-2-oxoglutarate (HMG) into 2 molecules of pyruvate. Also contains a secondary oxaloacetate (OAA) decarboxylase activity due to the common pyruvate enolate transition state formed following C-C bond cleavage in the retro-aldol and decarboxylation reactions. The chain is Putative 4-hydroxy-4-methyl-2-oxoglutarate aldolase from Halorhodospira halophila (strain DSM 244 / SL1) (Ectothiorhodospira halophila (strain DSM 244 / SL1)).